The primary structure comprises 438 residues: Tol-Pal system protein TolB (438 aa).

Residues 1-21 form the signal peptide; sequence MVKRSLLVLALLICLPATLFA.

This sequence belongs to the TolB family. In terms of assembly, the Tol-Pal system is composed of five core proteins: the inner membrane proteins TolA, TolQ and TolR, the periplasmic protein TolB and the outer membrane protein Pal. They form a network linking the inner and outer membranes and the peptidoglycan layer.

It localises to the periplasm. In terms of biological role, part of the Tol-Pal system, which plays a role in outer membrane invagination during cell division and is important for maintaining outer membrane integrity. The sequence is that of Tol-Pal system protein TolB from Desulfosudis oleivorans (strain DSM 6200 / JCM 39069 / Hxd3) (Desulfococcus oleovorans).